The primary structure comprises 172 residues: Adenine phosphoribosyltransferase (172 aa).

It belongs to the purine/pyrimidine phosphoribosyltransferase family. As to quaternary structure, homodimer.

The protein resides in the cytoplasm. The catalysed reaction is AMP + diphosphate = 5-phospho-alpha-D-ribose 1-diphosphate + adenine. The protein operates within purine metabolism; AMP biosynthesis via salvage pathway; AMP from adenine: step 1/1. In terms of biological role, catalyzes a salvage reaction resulting in the formation of AMP, that is energically less costly than de novo synthesis. The chain is Adenine phosphoribosyltransferase from Trichormus variabilis (strain ATCC 29413 / PCC 7937) (Anabaena variabilis).